The primary structure comprises 454 residues: UDP-N-acetylmuramate--L-alanine ligase (454 aa).

ATP is bound at residue 112–118; that stretch reads GTHGKTT.

It belongs to the MurCDEF family.

It is found in the cytoplasm. The catalysed reaction is UDP-N-acetyl-alpha-D-muramate + L-alanine + ATP = UDP-N-acetyl-alpha-D-muramoyl-L-alanine + ADP + phosphate + H(+). Its pathway is cell wall biogenesis; peptidoglycan biosynthesis. Cell wall formation. This is UDP-N-acetylmuramate--L-alanine ligase from Nitratidesulfovibrio vulgaris (strain ATCC 29579 / DSM 644 / CCUG 34227 / NCIMB 8303 / VKM B-1760 / Hildenborough) (Desulfovibrio vulgaris).